Consider the following 240-residue polypeptide: Aspartate/glutamate leucyltransferase (240 aa).

It belongs to the R-transferase family. Bpt subfamily.

It localises to the cytoplasm. The catalysed reaction is N-terminal L-glutamyl-[protein] + L-leucyl-tRNA(Leu) = N-terminal L-leucyl-L-glutamyl-[protein] + tRNA(Leu) + H(+). It catalyses the reaction N-terminal L-aspartyl-[protein] + L-leucyl-tRNA(Leu) = N-terminal L-leucyl-L-aspartyl-[protein] + tRNA(Leu) + H(+). In terms of biological role, functions in the N-end rule pathway of protein degradation where it conjugates Leu from its aminoacyl-tRNA to the N-termini of proteins containing an N-terminal aspartate or glutamate. The polypeptide is Aspartate/glutamate leucyltransferase (Gluconobacter oxydans (strain 621H) (Gluconobacter suboxydans)).